The sequence spans 889 residues: Chitin synthase I (889 aa).

A glycan (N-linked (GlcNAc...) asparagine) is linked at asparagine 43. The interval 94–138 is disordered; sequence GEYFDGYNQGHPPQEHQAYDDDGQPLIEDQHGYSDNPQHQTQTPA. The span at 126-137 shows a compositional bias: polar residues; sequence YSDNPQHQTQTP. The N-linked (GlcNAc...) asparagine glycan is linked to asparagine 199. 9 helical membrane passes run 431 to 451, 530 to 550, 560 to 580, 606 to 626, 641 to 661, 687 to 707, 716 to 736, 815 to 835, and 861 to 881; these read SAFG…YVAL, RWLN…YEFF, LAFF…WFAI, ILGV…FVLS, MVWF…FIAV, TLII…IIMF, FIQY…YAFC, GVVL…LSSA, and IVLW…MWFL.

The protein belongs to the chitin synthase family. Class I subfamily. Expressed in hyphal bodies.

The protein localises to the cell membrane. The catalysed reaction is [(1-&gt;4)-N-acetyl-beta-D-glucosaminyl](n) + UDP-N-acetyl-alpha-D-glucosamine = [(1-&gt;4)-N-acetyl-beta-D-glucosaminyl](n+1) + UDP + H(+). Its function is as follows. Polymerizes chitin, a structural polymer of the cell wall and septum, by transferring the sugar moiety of UDP-GlcNAc to the non-reducing end of the growing chitin polymer. Contributes to the production of conidia and the ability of fungal conidia to germinate. Not involved in fungal stress tolerances. The sequence is that of Chitin synthase I from Metarhizium acridum (strain CQMa 102).